The chain runs to 429 residues: UDP-N-acetylglucosamine 1-carboxyvinyltransferase (429 aa).

Residue 22–23 (KN) coordinates phosphoenolpyruvate. Residue Arg102 participates in UDP-N-acetyl-alpha-D-glucosamine binding. Cys126 (proton donor) is an active-site residue. Cys126 is subject to 2-(S-cysteinyl)pyruvic acid O-phosphothioketal. Residues 171–174 (KVSV), Asp316, and Ile338 contribute to the UDP-N-acetyl-alpha-D-glucosamine site.

This sequence belongs to the EPSP synthase family. MurA subfamily.

It localises to the cytoplasm. The catalysed reaction is phosphoenolpyruvate + UDP-N-acetyl-alpha-D-glucosamine = UDP-N-acetyl-3-O-(1-carboxyvinyl)-alpha-D-glucosamine + phosphate. It participates in cell wall biogenesis; peptidoglycan biosynthesis. In terms of biological role, cell wall formation. Adds enolpyruvyl to UDP-N-acetylglucosamine. This Azorhizobium caulinodans (strain ATCC 43989 / DSM 5975 / JCM 20966 / LMG 6465 / NBRC 14845 / NCIMB 13405 / ORS 571) protein is UDP-N-acetylglucosamine 1-carboxyvinyltransferase.